We begin with the raw amino-acid sequence, 444 residues long: Orexin receptor type 2 (444 aa).

The span at 1–10 shows a compositional bias: basic and acidic residues; that stretch reads MSGTKLEDSP. The interval 1 to 30 is disordered; the sequence is MSGTKLEDSPPCRNWSSAPELNETQEPFLN. Residues 1–54 lie on the Extracellular side of the membrane; sequence MSGTKLEDSPPCRNWSSAPELNETQEPFLNPTDYDDEEFLRYLWREYLHPKEYE. N-linked (GlcNAc...) asparagine glycosylation is found at Asn-14 and Asn-22. Positions 14 to 27 are enriched in polar residues; the sequence is NWSSAPELNETQEP. Residues 33 to 49 form a required for response to orexin-A region; it reads DYDDEEFLRYLWREYLH. The helical transmembrane segment at 55–75 threads the bilayer; sequence WVLIAGYIIVFVVALIGNVLV. The Cytoplasmic segment spans residues 76–88; that stretch reads CVAVWKNHHMRTV. Residues 89-110 traverse the membrane as a helical segment; sequence TNYFIVNLSLADVLVTITCLPA. The Extracellular segment spans residues 111–127; that stretch reads TLVVDITETWFFGQSLC. Residues Cys-127 and Cys-210 are joined by a disulfide bond. Residues 128-150 traverse the membrane as a helical segment; the sequence is KVIPYLQTVSVSVSVLTLSCIAL. Residues 151 to 170 are Cytoplasmic-facing; sequence DRWYAICHPLMFKSTAKRAR. A helical transmembrane segment spans residues 171-191; sequence NSIVIIWIVSCIIMIPQAIVM. Over 192 to 222 the chain is Extracellular; the sequence is ECSTMLPGLANKTTLFTVCDERWGGEIYPKM. N-linked (GlcNAc...) asparagine glycosylation is present at Asn-202. A helical transmembrane segment spans residues 223 to 243; sequence YHICFFLVTYMAPLCLMVLAY. The Cytoplasmic segment spans residues 244–304; the sequence is LQIFRKLWCR…QIRARRKTAR (61 aa). The chain crosses the membrane as a helical span at residues 305-326; it reads MLMVVLLVFAICYLPISILNVL. Over 327–342 the chain is Extracellular; it reads KRVFGMFTHTEDRETV. A helical membrane pass occupies residues 343-366; it reads YAWFTFSHWLVYANSAANPIIYNF. Over 367–444 the chain is Cytoplasmic; that stretch reads LSGKFREEFK…ANGAGQLQNW (78 aa).

The protein belongs to the G-protein coupled receptor 1 family.

Its subcellular location is the cell membrane. Nonselective, high-affinity receptor for both orexin-A and orexin-B neuropeptides. Triggers an increase in cytoplasmic Ca(2+) levels in response to orexin-A binding. In Sus scrofa (Pig), this protein is Orexin receptor type 2 (HCRTR2).